Consider the following 445-residue polypeptide: NADH-quinone oxidoreductase subunit F (445 aa).

NAD(+) is bound at residue 61–70 (GRGGAGFSTG). Residue 174–221 (GAGRYICGEETALINSLEGRRANPRSKPPFPATSGVWGKPTCVNNVET) participates in FMN binding. [4Fe-4S] cluster-binding residues include cysteine 351, cysteine 354, cysteine 357, and cysteine 398.

This sequence belongs to the complex I 51 kDa subunit family. Composed of 13 different subunits. Subunits NuoCD, E, F, and G constitute the peripheral sector of the complex. FMN is required as a cofactor. It depends on [4Fe-4S] cluster as a cofactor.

It catalyses the reaction a quinone + NADH + 5 H(+)(in) = a quinol + NAD(+) + 4 H(+)(out). Its function is as follows. NDH-1 shuttles electrons from NADH, via FMN and iron-sulfur (Fe-S) centers, to quinones in the respiratory chain. The immediate electron acceptor for the enzyme in this species is believed to be ubiquinone. Couples the redox reaction to proton translocation (for every two electrons transferred, four hydrogen ions are translocated across the cytoplasmic membrane), and thus conserves the redox energy in a proton gradient. The polypeptide is NADH-quinone oxidoreductase subunit F (nuoF) (Salmonella typhimurium (strain LT2 / SGSC1412 / ATCC 700720)).